Here is a 132-residue protein sequence, read N- to C-terminus: uncharacterized protein (132 aa).

WD repeat units lie at residues 14–53 and 58–97; these read DLQDDISSVCCSPCNRYIIIASGNNCQHIYYLCATNLEIL and AHDDSIVHLVSTLDGKYIVSSGLDGLIKIWNFKTANLANV.

This is an uncharacterized protein from Acanthamoeba polyphaga (Amoeba).